Here is a 255-residue protein sequence, read N- to C-terminus: Proteasome subunit alpha (255 aa).

Residues 228-255 form a disordered region; that stretch reads LLASPAGTSGPTGEPGPAGTAATDGGDL. Positions 232-255 are enriched in low complexity; it reads PAGTSGPTGEPGPAGTAATDGGDL.

This sequence belongs to the peptidase T1A family. As to quaternary structure, the 20S proteasome core is composed of 14 alpha and 14 beta subunits that assemble into four stacked heptameric rings, resulting in a barrel-shaped structure. The two inner rings, each composed of seven catalytic beta subunits, are sandwiched by two outer rings, each composed of seven alpha subunits. The catalytic chamber with the active sites is on the inside of the barrel. Has a gated structure, the ends of the cylinder being occluded by the N-termini of the alpha-subunits. Is capped by the proteasome-associated ATPase, ARC.

Its subcellular location is the cytoplasm. Its pathway is protein degradation; proteasomal Pup-dependent pathway. With respect to regulation, the formation of the proteasomal ATPase ARC-20S proteasome complex, likely via the docking of the C-termini of ARC into the intersubunit pockets in the alpha-rings, may trigger opening of the gate for substrate entry. Interconversion between the open-gate and close-gate conformations leads to a dynamic regulation of the 20S proteasome proteolysis activity. Its function is as follows. Component of the proteasome core, a large protease complex with broad specificity involved in protein degradation. The protein is Proteasome subunit alpha of Sanguibacter keddieii (strain ATCC 51767 / DSM 10542 / NCFB 3025 / ST-74).